Consider the following 62-residue polypeptide: Venom peptide SjAPI-2 (62 aa).

Cystine bridges form between Cys4/Cys40, Cys14/Cys36, Cys18/Cys32, Cys22/Cys60, and Cys42/Cys54. One can recognise a TIL domain in the interval 4–60 (CRISGEVFTWCGTTCPLTCENFRNPPKHCPQGCFVGCMCRRGLVRHRNGRCVRPPRC).

The protein belongs to the serine protease inhibitor-like (TIL domain-containing) family. Expressed by the venom gland.

It is found in the secreted. Its function is as follows. Serine protease inhibitor. This Scorpiops jendeki (Scorpion) protein is Venom peptide SjAPI-2.